A 1297-amino-acid polypeptide reads, in one-letter code: Phosphoribosylformylglycinamidine synthase (1297 aa).

The interval 305-324 is disordered; that stretch reads FPGAATGSGGEIRDEGATGR. 307–318 is a binding site for ATP; sequence GAATGSGGEIRD. The Mg(2+) site is built by Asp-679, Glu-718, Asn-722, and Asp-886. Residue Ser-888 participates in ATP binding. Positions 1044 to 1297 constitute a Glutamine amidotransferase type-1 domain; sequence IAVLREQGVN…LFRNARVFFK (254 aa). Cys-1137 acts as the Nucleophile in catalysis. Residues His-1262 and Glu-1264 contribute to the active site.

It in the N-terminal section; belongs to the FGAMS family. As to quaternary structure, monomer.

The protein resides in the cytoplasm. The enzyme catalyses N(2)-formyl-N(1)-(5-phospho-beta-D-ribosyl)glycinamide + L-glutamine + ATP + H2O = 2-formamido-N(1)-(5-O-phospho-beta-D-ribosyl)acetamidine + L-glutamate + ADP + phosphate + H(+). It participates in purine metabolism; IMP biosynthesis via de novo pathway; 5-amino-1-(5-phospho-D-ribosyl)imidazole from N(2)-formyl-N(1)-(5-phospho-D-ribosyl)glycinamide: step 1/2. Phosphoribosylformylglycinamidine synthase involved in the purines biosynthetic pathway. Catalyzes the ATP-dependent conversion of formylglycinamide ribonucleotide (FGAR) and glutamine to yield formylglycinamidine ribonucleotide (FGAM) and glutamate. The polypeptide is Phosphoribosylformylglycinamidine synthase (Mannheimia succiniciproducens (strain KCTC 0769BP / MBEL55E)).